A 363-amino-acid chain; its full sequence is Aminomethyltransferase (363 aa).

This sequence belongs to the GcvT family. As to quaternary structure, the glycine cleavage system is composed of four proteins: P, T, L and H.

The enzyme catalyses N(6)-[(R)-S(8)-aminomethyldihydrolipoyl]-L-lysyl-[protein] + (6S)-5,6,7,8-tetrahydrofolate = N(6)-[(R)-dihydrolipoyl]-L-lysyl-[protein] + (6R)-5,10-methylene-5,6,7,8-tetrahydrofolate + NH4(+). In terms of biological role, the glycine cleavage system catalyzes the degradation of glycine. The protein is Aminomethyltransferase of Nitrosomonas eutropha (strain DSM 101675 / C91 / Nm57).